The following is a 188-amino-acid chain: Segregation and condensation protein B (188 aa).

It belongs to the ScpB family. As to quaternary structure, homodimer. Homodimerization may be required to stabilize the binding of ScpA to the Smc head domains. Component of a cohesin-like complex composed of ScpA, ScpB and the Smc homodimer, in which ScpA and ScpB bind to the head domain of Smc. The presence of the three proteins is required for the association of the complex with DNA.

The protein resides in the cytoplasm. Participates in chromosomal partition during cell division. May act via the formation of a condensin-like complex containing Smc and ScpA that pull DNA away from mid-cell into both cell halves. The chain is Segregation and condensation protein B from Lactococcus lactis subsp. lactis (strain IL1403) (Streptococcus lactis).